The following is a 220-amino-acid chain: Adenylate kinase (220 aa).

10 to 15 (GAGKGT) lines the ATP pocket. Positions 30–59 (STGDMLRAAVKAGTPLGVEAKTYMDEGKLV) are NMP. Residues Thr-31, Arg-36, 57-59 (KLV), 85-88 (GFPR), and Gln-92 each bind AMP. The segment at 122-159 (GRRTHPASGRTYHVKFNPPKVEGKDDVTGEPLVQRDDD) is LID. ATP contacts are provided by residues Arg-123 and 132-133 (TY). AMP-binding residues include Arg-156 and Arg-167. Gly-206 serves as a coordination point for ATP.

The protein belongs to the adenylate kinase family. Monomer.

It is found in the cytoplasm. It catalyses the reaction AMP + ATP = 2 ADP. It functions in the pathway purine metabolism; AMP biosynthesis via salvage pathway; AMP from ADP: step 1/1. Functionally, catalyzes the reversible transfer of the terminal phosphate group between ATP and AMP. Plays an important role in cellular energy homeostasis and in adenine nucleotide metabolism. The chain is Adenylate kinase from Burkholderia mallei (strain NCTC 10247).